Reading from the N-terminus, the 946-residue chain is ATP-dependent 6-phosphofructokinase subunit beta (946 aa).

Positions 1–559 (MISIVNGTST…HLANFMAMNT (559 aa)) are N-terminal catalytic PFK domain 1. ATP-binding positions include glycine 192, 256 to 257 (RC), and 286 to 289 (GDGS). Aspartate 287 is a binding site for Mg(2+). Beta-D-fructose 6-phosphate is bound by residues 332–334 (SID), arginine 369, 376–378 (MGR), glutamate 433, arginine 461, and 467–470 (HVQR). Residue aspartate 334 is the Proton acceptor of the active site. An interdomain linker region spans residues 560-573 (ANHEKPTLPREKRK). The segment at 574-946 (KIAIINIGAP…LVGRTRLDKP (373 aa)) is C-terminal regulatory PFK domain 2. Residues arginine 644, 702 to 706 (TISNN), 747 to 749 (QGG), lysine 833, 839 to 842 (HVQQ), and arginine 920 each bind beta-D-fructose 2,6-bisphosphate.

The protein belongs to the phosphofructokinase type A (PFKA) family. ATP-dependent PFK group I subfamily. Eukaryotic two domain clade 'E' sub-subfamily. Heterooctamer of 4 alpha and 4 beta chains. Mg(2+) serves as cofactor.

It is found in the cytoplasm. The catalysed reaction is beta-D-fructose 6-phosphate + ATP = beta-D-fructose 1,6-bisphosphate + ADP + H(+). The protein operates within carbohydrate degradation; glycolysis; D-glyceraldehyde 3-phosphate and glycerone phosphate from D-glucose: step 3/4. Its activity is regulated as follows. Allosterically activated by ADP, AMP, or fructose 2,6-bisphosphate, and allosterically inhibited by ATP or citrate. Functionally, catalyzes the phosphorylation of D-fructose 6-phosphate to fructose 1,6-bisphosphate by ATP, the first committing step of glycolysis. The polypeptide is ATP-dependent 6-phosphofructokinase subunit beta (PFK2) (Candida albicans (Yeast)).